A 673-amino-acid chain; its full sequence is FLYWCH-type zinc finger-containing protein 1 (673 aa).

The tract at residues 1-62 is disordered; sequence MPLPEPSEQD…SSTATLPNNT (62 aa). Ser21 carries the phosphoserine modification. Polar residues predominate over residues 47 to 62; the sequence is VASQETSSTATLPNNT. FLYWCH-type zinc fingers lie at residues 92–150 and 235–293; these read FLKT…DHCH and FLKT…SHCH. Residue Lys110 forms a Glycyl lysine isopeptide (Lys-Gly) (interchain with G-Cter in SUMO2) linkage. Residues 147 to 158 show a composition bias toward basic and acidic residues; the sequence is DHCHPPEKEGLD. Residues 147–178 are disordered; the sequence is DHCHPPEKEGLDRKKRHRGRPPSSALPEGAEV. Phosphoserine is present on residues Ser294 and Ser339. The interval 351-402 is disordered; that stretch reads LSRSKSKSKSKSRSKSKSKSRSRSRKRAKKQQESSQEPPEEDQDVDPRGPEF. A compositionally biased stretch (basic residues) spans 354-379; the sequence is SKSKSKSKSRSKSKSKSRSRSRKRAK. 3 consecutive FLYWCH-type zinc fingers follow at residues 402–460, 490–548, and 581–639; these read FLKT…SHCH, FLKT…RHCH, and FLRT…SHCH. The segment at 646–673 is disordered; it reads LEALRQREKAPSAAKKKKKKKKKKKGIH. Over residues 659 to 673 the composition is skewed to basic residues; sequence AKKKKKKKKKKKGIH. Residue Lys666 forms a Glycyl lysine isopeptide (Lys-Gly) (interchain with G-Cter in SUMO2) linkage.

In terms of assembly, interacts with CTNNB1 (when unphosphorylated), perhaps preventing interaction of CTNNB1 with TCF4, and thereby regulating transcription activation; phosphorylation of CTNNB1 may inhibit the interaction.

The protein resides in the nucleus. It is found in the chromosome. It localises to the centromere. Transcription cofactor. Negatively regulates transcription activation by catenin beta-1 CTNNB1, perhaps acting by competing with TCF4 for CTNNB1 binding. May play a role in DNA-damage response signaling. Binds specifically to DNA sequences at peri-centromeric chromatin loci. This chain is FLYWCH-type zinc finger-containing protein 1 (Flywch1), found in Mus musculus (Mouse).